A 387-amino-acid polypeptide reads, in one-letter code: Anhydro-N-acetylmuramic acid kinase (387 aa).

17 to 24 (GTSMDGVD) serves as a coordination point for ATP.

Belongs to the anhydro-N-acetylmuramic acid kinase family.

The enzyme catalyses 1,6-anhydro-N-acetyl-beta-muramate + ATP + H2O = N-acetyl-D-muramate 6-phosphate + ADP + H(+). It functions in the pathway amino-sugar metabolism; 1,6-anhydro-N-acetylmuramate degradation. Its pathway is cell wall biogenesis; peptidoglycan recycling. Functionally, catalyzes the specific phosphorylation of 1,6-anhydro-N-acetylmuramic acid (anhMurNAc) with the simultaneous cleavage of the 1,6-anhydro ring, generating MurNAc-6-P. Is required for the utilization of anhMurNAc either imported from the medium or derived from its own cell wall murein, and thus plays a role in cell wall recycling. The chain is Anhydro-N-acetylmuramic acid kinase from Burkholderia pseudomallei (strain 1710b).